Consider the following 445-residue polypeptide: Argininosuccinate synthase (445 aa).

ATP-binding positions include 17-25 (AFSGGLDTS) and A43. Y99 is an L-citrulline binding site. The ATP site is built by G129 and T131. Residues T131, N135, and D136 each contribute to the L-aspartate site. Residue N135 coordinates L-citrulline. D136 is a binding site for ATP. 2 residues coordinate L-citrulline: R139 and S192. Residue D194 coordinates ATP. Residues T201, E203, and E280 each coordinate L-citrulline.

Belongs to the argininosuccinate synthase family. Type 2 subfamily. Homotetramer.

The protein localises to the cytoplasm. It catalyses the reaction L-citrulline + L-aspartate + ATP = 2-(N(omega)-L-arginino)succinate + AMP + diphosphate + H(+). The protein operates within amino-acid biosynthesis; L-arginine biosynthesis; L-arginine from L-ornithine and carbamoyl phosphate: step 2/3. The protein is Argininosuccinate synthase of Bordetella bronchiseptica (strain ATCC BAA-588 / NCTC 13252 / RB50) (Alcaligenes bronchisepticus).